The sequence spans 326 residues: Phospho-N-acetylmuramoyl-pentapeptide-transferase (326 aa).

Transmembrane regions (helical) follow at residues 3–23, 51–71, 79–99, 115–135, 138–158, 169–189, 195–215, 221–243, and 306–326; these read ISISAGIVTFLLTLVEIPAFI, TMGGLVFLITSVLVAFFFALF, VGMILFILVLYGLVGFLDDFL, LALQLLGGVIFYLFYERGGDI, VFGYPVHLGFFYIFFALFWLV, GVDGLASISVVISLSAYGVIA, MDILLVILAMIGGLLGFFIFN, VFMGDVGSLALGGMLAAISMALH, and FFFWGVGLLASLLTLAILYLM.

The protein belongs to the glycosyltransferase 4 family. MraY subfamily. Mg(2+) is required as a cofactor.

Its subcellular location is the cell membrane. The catalysed reaction is UDP-N-acetyl-alpha-D-muramoyl-L-alanyl-gamma-D-glutamyl-L-lysyl-D-alanyl-D-alanine + di-trans,octa-cis-undecaprenyl phosphate = Mur2Ac(oyl-L-Ala-gamma-D-Glu-L-Lys-D-Ala-D-Ala)-di-trans,octa-cis-undecaprenyl diphosphate + UMP. Its pathway is cell wall biogenesis; peptidoglycan biosynthesis. Functionally, catalyzes the initial step of the lipid cycle reactions in the biosynthesis of the cell wall peptidoglycan: transfers peptidoglycan precursor phospho-MurNAc-pentapeptide from UDP-MurNAc-pentapeptide onto the lipid carrier undecaprenyl phosphate, yielding undecaprenyl-pyrophosphoryl-MurNAc-pentapeptide, known as lipid I. The protein is Phospho-N-acetylmuramoyl-pentapeptide-transferase of Streptococcus pneumoniae (strain 70585).